A 268-amino-acid polypeptide reads, in one-letter code: GTP cyclohydrolase III (268 aa).

This sequence belongs to the archaeal-type GTP cyclohydrolase family. In terms of assembly, homotrimer. It depends on Mg(2+) as a cofactor.

The catalysed reaction is GTP + 3 H2O = 2-amino-5-formylamino-6-(5-phospho-D-ribosylamino)pyrimidin-4(3H)-one + 2 phosphate + 2 H(+). Functionally, catalyzes the formation of 2-amino-5-formylamino-6-ribofuranosylamino-4(3H)-pyrimidinone ribonucleotide monophosphate and inorganic phosphate from GTP. Also has an independent pyrophosphate phosphohydrolase activity. The sequence is that of GTP cyclohydrolase III (gch3) from Methanocaldococcus jannaschii (strain ATCC 43067 / DSM 2661 / JAL-1 / JCM 10045 / NBRC 100440) (Methanococcus jannaschii).